The following is a 69-amino-acid chain: Small, acid-soluble spore protein A (69 aa).

Belongs to the alpha/beta-type SASP family.

In terms of biological role, SASP are bound to spore DNA. They are double-stranded DNA-binding proteins that cause DNA to change to an a-like conformation. They protect the DNA backbone from chemical and enzymatic cleavage and are thus involved in dormant spore's high resistance to UV light. This is Small, acid-soluble spore protein A (sspA) from Bacillus subtilis (strain 168).